Here is a 520-residue protein sequence, read N- to C-terminus: Interferon lambda receptor 1 (520 aa).

Residues 1–20 (MAGPERWGPLLLCLLQAAPG) form the signal peptide. The Extracellular portion of the chain corresponds to 21–228 (RPRLAPPQNV…LLEVPEANWA (208 aa)). In terms of domain architecture, Fibronectin type-III spans 26 to 126 (PPQNVTLLSQ…LDYLFEVEPA (101 aa)). 2 N-linked (GlcNAc...) asparagine glycosylation sites follow: N29 and N36. Disulfide bonds link C74-C82 and C86-C150. 2 N-linked (GlcNAc...) asparagine glycosylation sites follow: N142 and N169. C195 and C217 are joined by a disulfide. Residues 229–249 (FLVLPSLLILLLVIAAGGVIW) form a helical membrane-spanning segment. Residues 250–520 (KTLMGNPWFQ…GRTLGHYMAR (271 aa)) are Cytoplasmic-facing. Disordered stretches follow at residues 302–439 (VRPT…FLEE) and 477–520 (ESSP…YMAR). The span at 323–336 (AEDEEEEDEEDTED) shows a compositional bias: acidic residues. Positions 380–392 (SSAWDSSDRSWAS) are enriched in low complexity. The segment covering 479-495 (SPEEEEEARESEIEDSD) has biased composition (acidic residues).

This sequence belongs to the type II cytokine receptor family. In terms of assembly, heterodimer with IL10RB. Post-translationally, ubiquitinated by FBXO45-containing E3 ligase leading to proteasomal degradation. In terms of tissue distribution, widely expressed.

Its subcellular location is the membrane. The IFNLR1/IL10RB dimer is a receptor for the cytokine ligands IFNL2 and IFNL3 and mediates their antiviral activity. The ligand/receptor complex stimulate the activation of the JAK/STAT signaling pathway leading to the expression of IFN-stimulated genes (ISG), which contribute to the antiviral state. Determines the cell type specificity of the lambda interferon action. Shows a more restricted pattern of expression in the epithelial tissues thereby limiting responses to lambda interferons primarily to epithelial cells of the respiratory, gastrointestinal, and reproductive tracts. Seems not to be essential for early virus-activated host defense in vaginal infection, but plays an important role in Toll-like receptor (TLR)-induced antiviral defense. Plays a significant role in the antiviral immune defense in the intestinal epithelium. This chain is Interferon lambda receptor 1 (IFNLR1), found in Homo sapiens (Human).